Here is a 141-residue protein sequence, read N- to C-terminus: Nucleoside diphosphate kinase (141 aa).

Residues K11, F59, R87, T93, R104, and N114 each contribute to the ATP site. The Pros-phosphohistidine intermediate role is filled by H117.

This sequence belongs to the NDK family. Homotetramer. It depends on Mg(2+) as a cofactor.

It is found in the cytoplasm. The enzyme catalyses a 2'-deoxyribonucleoside 5'-diphosphate + ATP = a 2'-deoxyribonucleoside 5'-triphosphate + ADP. The catalysed reaction is a ribonucleoside 5'-diphosphate + ATP = a ribonucleoside 5'-triphosphate + ADP. Functionally, major role in the synthesis of nucleoside triphosphates other than ATP. The ATP gamma phosphate is transferred to the NDP beta phosphate via a ping-pong mechanism, using a phosphorylated active-site intermediate. This is Nucleoside diphosphate kinase from Halorhodospira halophila (strain DSM 244 / SL1) (Ectothiorhodospira halophila (strain DSM 244 / SL1)).